The sequence spans 201 residues: Large ribosomal subunit protein uL18 (201 aa).

It belongs to the universal ribosomal protein uL18 family. Part of the 50S ribosomal subunit. Contacts the 5S and 23S rRNAs.

Functionally, this is one of the proteins that bind and probably mediate the attachment of the 5S RNA into the large ribosomal subunit, where it forms part of the central protuberance. This Thermococcus kodakarensis (strain ATCC BAA-918 / JCM 12380 / KOD1) (Pyrococcus kodakaraensis (strain KOD1)) protein is Large ribosomal subunit protein uL18.